A 1187-amino-acid polypeptide reads, in one-letter code: DENN domain and WD repeat-containing protein SCD1 (1187 aa).

Positions 19–179 (TVDGDLGFHG…NVPLPTPGKD (161 aa)) constitute a uDENN domain. The 132-residue stretch at 199-330 (SLPQADISLQ…EFSTLRNDIL (132 aa)) folds into the cDENN domain. Residues 332–437 (LLHPNVVAID…ERRLSSDEKS (106 aa)) enclose the dDENN domain. Disordered stretches follow at residues 508-536 (SGALESNGRHPPSSPPGKNTKEDNFSSME) and 765-793 (SAGLPSPRPKDVSVSDETQQPSEASGRSW). Positions 526-536 (NTKEDNFSSME) are enriched in basic and acidic residues. Positions 779 to 793 (SDETQQPSEASGRSW) are enriched in polar residues. WD repeat units lie at residues 841–892 (GHGG…SELR), 897–934 (GHTGTVRAISSDRGKIVSGSDDLSVIVWDKQTTQLLEE), 937–975 (GHDSQVSCVKMLSGERVLTAAHDGTVKMWDVRTDMCVAT), 978–1017 (RCSSAILSLEYDDSTGILAAAGRDTVANIWDIRSGKQMHK), 1020–1057 (GHTKWIRSIRMVEDTLITGSDDWTARVWSVSRGSCDAV), 1060–1099 (CHAGPVQSVEYSPFDKGIITGSADGLLRFWENDEGGIKCV), 1104–1141 (LHSSSILSINAGENWLGIGAADNSMSLFHRPSNAGTKV), and 1152–1187 (RTAAVVRCVASDLERKRICSGGRNGVLRLWDATINI).

As to quaternary structure, interacts with FLS2. In terms of tissue distribution, expressed in roots, rosette and cauline leaves, buds and flowers.

It is found in the cell membrane. It localises to the cytoplasmic vesicle. The protein resides in the clathrin-coated vesicle. Functionally, involved in growth and development through its role in cytokinesis and polarized cell expansion. Required for plasma membrane internalization. May function in clathrin-mediated membrane trafficking, including plasma membrane endocytosis, essential to both cytokinesis and cell expansion. Acts as a negative regulator of basal resistance against bacteria. The polypeptide is DENN domain and WD repeat-containing protein SCD1 (Arabidopsis thaliana (Mouse-ear cress)).